Here is a 501-residue protein sequence, read N- to C-terminus: MLO-like protein 5 (501 aa).

Residues 1-22 (MAGGGGGSTSGEGPRELDQTPT) lie on the Extracellular side of the membrane. Residues 23–43 (WAVSTVCGVIILISIVLELMI) traverse the membrane as a helical segment. The Cytoplasmic segment spans residues 44-68 (HKIGEVFTERRKKALYEALQKIKNE). A helical transmembrane segment spans residues 69 to 89 (LMVLGFISLLLTFGQNYIASL). At 90-151 (CVASRYGHAM…ISLNALHQVH (62 aa)) the chain is on the extracellular side. A helical transmembrane segment spans residues 152 to 172 (IFIFFLAVFHVIYSAITMMLG). Residues 173 to 273 (RAKIRGWKVW…IKRSLEDDFK (101 aa)) are Cytoplasmic-facing. The chain crosses the membrane as a helical span at residues 274 to 294 (VVVGISPELWAFVMLFLLFDV). Position 295 (histidine 295) is a topological domain, extracellular. Residues 296 to 316 (GWYVTAVITMIPPLLTLAIGT) form a helical membrane-spanning segment. Residues 317–359 (KLQAIISDMALEIQERHAVIQGMPLVNVSDRHFWFSRPALVLH) are Cytoplasmic-facing. The helical transmembrane segment at 360–380 (IIHFILFQNAFEITYFFWIWY) threads the bilayer. Topologically, residues 381–391 (EFGLRSCFHHH) are extracellular. The chain crosses the membrane as a helical span at residues 392–412 (FALIIIRVALGVGVQFLCSYI). Residues 413 to 501 (TLPLYALVTQ…SQSRDLLSGP (89 aa)) are Cytoplasmic-facing. The disordered stretch occupies residues 443–501 (WHKNAKKKSETPGQTQPPLPNLRPKTGGDIESASPANITASVDVKESDQSQSRDLLSGP). The tract at residues 450–471 (KSETPGQTQPPLPNLRPKTGGD) is calmodulin-binding. The segment covering 491-501 (QSQSRDLLSGP) has biased composition (polar residues).

Belongs to the MLO family.

The protein localises to the membrane. Its function is as follows. May be involved in modulation of pathogen defense and leaf cell death. Activity seems to be regulated by Ca(2+)-dependent calmodulin binding and seems not to require heterotrimeric G proteins. The chain is MLO-like protein 5 (MLO5) from Arabidopsis thaliana (Mouse-ear cress).